A 348-amino-acid chain; its full sequence is Sulfate/thiosulfate import ATP-binding protein CysA (348 aa).

One can recognise an ABC transporter domain in the interval 3–237 (IRIQELCKQF…PSSPFVYSFV (235 aa)). 35-42 (GPSGSGKT) provides a ligand contact to ATP.

It belongs to the ABC transporter superfamily. Sulfate/tungstate importer (TC 3.A.1.6) family. In terms of assembly, the complex is composed of two ATP-binding proteins (CysA), two transmembrane proteins (CysT and CysW) and a solute-binding protein (CysP).

Its subcellular location is the cell inner membrane. It catalyses the reaction sulfate(out) + ATP + H2O = sulfate(in) + ADP + phosphate + H(+). The catalysed reaction is thiosulfate(out) + ATP + H2O = thiosulfate(in) + ADP + phosphate + H(+). In terms of biological role, part of the ABC transporter complex CysAWTP involved in sulfate/thiosulfate import. Responsible for energy coupling to the transport system. In Xylella fastidiosa (strain 9a5c), this protein is Sulfate/thiosulfate import ATP-binding protein CysA.